Reading from the N-terminus, the 261-residue chain is Acetoacetate decarboxylase 2 (261 aa).

The active-site Schiff-base intermediate with acetoacetate is Lys-116.

Belongs to the ADC family.

The enzyme catalyses acetoacetate + H(+) = acetone + CO2. Functionally, catalyzes the conversion of acetoacetate to acetone and carbon dioxide. The protein is Acetoacetate decarboxylase 2 of Mesorhizobium japonicum (strain LMG 29417 / CECT 9101 / MAFF 303099) (Mesorhizobium loti (strain MAFF 303099)).